The sequence spans 560 residues: Arginine--tRNA ligase (560 aa).

A 'HIGH' region motif is present at residues 121–131; it reads PNIAKPFSMGH.

The protein belongs to the class-I aminoacyl-tRNA synthetase family. As to quaternary structure, monomer.

It is found in the cytoplasm. The catalysed reaction is tRNA(Arg) + L-arginine + ATP = L-arginyl-tRNA(Arg) + AMP + diphosphate. This chain is Arginine--tRNA ligase, found in Exiguobacterium sibiricum (strain DSM 17290 / CCUG 55495 / CIP 109462 / JCM 13490 / 255-15).